The chain runs to 461 residues: Na(+)/H(+) antiporter NhaA (461 aa).

The interval 1–23 (MILSTQRLGRFMSPAPTPAPDAK) is disordered. Transmembrane regions (helical) follow at residues 48–68 (VGGA…NSPV), 89–109 (LSLG…LVGL), 127–147 (IVPV…YAAV), 157–177 (GWAI…AIIG), 186–206 (IFLL…IAFF), 211–231 (IQAA…FLAQ), 236–256 (FFGA…IVTW), 257–277 (ALVH…GFAV), 305–325 (ISAG…AVGG), 339–359 (IGII…TTWI), 374–394 (WIDV…SLLV), and 408–428 (HAKV…TVVL).

This sequence belongs to the NhaA Na(+)/H(+) (TC 2.A.33) antiporter family.

Its subcellular location is the cell membrane. It carries out the reaction Na(+)(in) + 2 H(+)(out) = Na(+)(out) + 2 H(+)(in). Na(+)/H(+) antiporter that extrudes sodium in exchange for external protons. The polypeptide is Na(+)/H(+) antiporter NhaA (Arthrobacter sp. (strain FB24)).